The following is a 447-amino-acid chain: Multicopper oxidase mco (447 aa).

Residues 1–25 (MMNMKEDKKNTMDMTNMKHHDERKK) show a composition bias toward basic and acidic residues. A disordered region spans residues 1–29 (MMNMKEDKKNTMDMTNMKHHDERKKLNSS). Residues His-107, His-109, His-147, His-149, His-375, His-378, His-380, His-428, Cys-429, His-430, His-434, and Met-439 each coordinate Cu cation.

This sequence belongs to the multicopper oxidase family. It depends on Cu cation as a cofactor.

The protein resides in the cytoplasm. May be involved in copper homeostasis and oxidative stress response. The sequence is that of Multicopper oxidase mco (mco) from Staphylococcus haemolyticus (strain JCSC1435).